Consider the following 115-residue polypeptide: Ribonuclease P protein component (115 aa).

The protein belongs to the RnpA family. As to quaternary structure, consists of a catalytic RNA component (M1 or rnpB) and a protein subunit.

It catalyses the reaction Endonucleolytic cleavage of RNA, removing 5'-extranucleotides from tRNA precursor.. RNaseP catalyzes the removal of the 5'-leader sequence from pre-tRNA to produce the mature 5'-terminus. It can also cleave other RNA substrates such as 4.5S RNA. The protein component plays an auxiliary but essential role in vivo by binding to the 5'-leader sequence and broadening the substrate specificity of the ribozyme. The chain is Ribonuclease P protein component from Bacillus cereus (strain Q1).